Here is a 740-residue protein sequence, read N- to C-terminus: MSSAVRIVEKQLDEILAIARNPAQIRNAGTLAHVDHGKTTTTDSLLMGAGLLSPKVAGKALAMDYVPIEQLRQMTVKAANISLYFEYGGKPYLINFVDTPGHVDFTGHVTRSLRVMDGGLVVVDAVEGVMTQTETVVRQALEEYVRPVLFINKIDRLIKELRLSPQEIQQRILTIVKDFNALIEMFAPPEFKDKWKIDPGKGQMAMGSALHKWGITIPMAQKAGIKFSNIIDAYEKGYVDQLAQEFPLYKTLLSMIIEHVPPPNVAQKYRIPRLWRGDLNSEVGKALLEADPNGPTVIAVSKVNKDPHAGLIVTGRVFSGTIREGDEIYIIGRKMKKKVLQTYIYMGPSRIIVPYMPAGNIVALMGVDEARAGDTLVDPRISDIPPFEKMRYIAEPVVTVAIEPKNPAELAKLVEALKDLVIEDPTLDLKIDQETGQILLSGVGTLHLEIATWLLKERSKTEFTVSPPLIRFRETVRERSQVWEGKSPNKHNRLYFYVEPLDETTIELIATKEITEDQDPRERAKILREKAGWDTDEARGIWAIDDRYFNVIVDKTSGIQYLREIRDYIVQGFRWATEAGPLAQEPIRGVKVVLVDAVVHEDPAHRGPAQIMPATKNAIFAAMLSAKPTVLEPLLRLDIKVAPDYIGAVTSVLNKHRGKILDMTQQEYMAYLRAELPVLESFTISDELRAAAAGKIFWSMQFSRWAPVPESMLLDLVKQLRKKKGLKEEIPKPTDFVEVY.

A tr-type G domain is found at 23–264; the sequence is AQIRNAGTLA…MIIEHVPPPN (242 aa). Residues 32–39, 98–102, and 152–155 each bind GTP; these read AHVDHGKT, DTPGH, and NKID. Position 605 is a diphthamide (H605).

It belongs to the TRAFAC class translation factor GTPase superfamily. Classic translation factor GTPase family. EF-G/EF-2 subfamily.

The protein localises to the cytoplasm. Functionally, catalyzes the GTP-dependent ribosomal translocation step during translation elongation. During this step, the ribosome changes from the pre-translocational (PRE) to the post-translocational (POST) state as the newly formed A-site-bound peptidyl-tRNA and P-site-bound deacylated tRNA move to the P and E sites, respectively. Catalyzes the coordinated movement of the two tRNA molecules, the mRNA and conformational changes in the ribosome. This chain is Elongation factor 2, found in Pyrobaculum islandicum (strain DSM 4184 / JCM 9189 / GEO3).